A 441-amino-acid chain; its full sequence is CBL-interacting serine/threonine-protein kinase 6 (441 aa).

Residues 24 to 278 (YELGRLLGHG…IEKVMDSPWF (255 aa)) form the Protein kinase domain. Residues 30-38 (LGHGTFAKV) and lysine 53 each bind ATP. Aspartate 146 serves as the catalytic Proton acceptor. Residues 164–193 (DFGLSAFTEHLKQDGLLHTTCGTPAYVAPE) are activation loop. Serine 168 carries the post-translational modification Phosphoserine. A Phosphothreonine modification is found at threonine 182. Positions 310–334 (EETETLNAFHIIALSEGFDLSPLFE) constitute an NAF domain. The segment at 341–371 (KREMRFATSRPASSVISSLEEAARVGNKFDV) is PPI.

Belongs to the protein kinase superfamily. CAMK Ser/Thr protein kinase family. SNF1 subfamily. In terms of assembly, part of a K(+)-channel calcium-sensing kinase/phosphatase complex composed by a calcium sensor CBL (CBL1, CBL2, CBL3 or CBL9), a kinase CIPK (CIPK6, CIPK16 or CIPK23), a phosphatase PP2C (AIP1) and a K(+)-channel (AKT1). Interacts with AKT1, AKT2,CBL1, CBL2, CBL3, CBL4/SOS3 and CBL9. It depends on Mn(2+) as a cofactor. Autophosphorylated. Expressed in roots and shoots.

The protein localises to the endoplasmic reticulum. The enzyme catalyses L-seryl-[protein] + ATP = O-phospho-L-seryl-[protein] + ADP + H(+). It catalyses the reaction L-threonyl-[protein] + ATP = O-phospho-L-threonyl-[protein] + ADP + H(+). Its function is as follows. CIPK serine-threonine protein kinases interact with CBL proteins. Binding of a CBL protein to the regulatory NAF domain of CIPK protein lead to the activation of the kinase in a calcium-dependent manner. Downstream of CBL1, CBL2, CBL3 and CBL9, regulates by phosphorylation the K(+) conductance and uptake of AKT1. Binds to CBL4 to modulate AKT2 activity by promoting a kinase interaction-dependent but phosphorylation-independent translocation of the channel to the plasma membrane. In Arabidopsis thaliana (Mouse-ear cress), this protein is CBL-interacting serine/threonine-protein kinase 6 (CIPK6).